The following is a 578-amino-acid chain: Longifolene synthase (578 aa).

3 residues coordinate Mg(2+): aspartate 331, aspartate 335, and aspartate 475. A DDXXD motif motif is present at residues 331 to 335 (DDLYD).

It belongs to the terpene synthase family. Tpsd subfamily. Mg(2+) is required as a cofactor. Mn(2+) serves as cofactor.

The protein resides in the cytoplasm. It carries out the reaction (2E,6E)-farnesyl diphosphate = longifolene + diphosphate. The protein operates within sesquiterpene biosynthesis. It participates in terpene metabolism; oleoresin biosynthesis. Functionally, involved in defensive oleoresin formation in conifers in response to insect attack or other injury. Involved in sesquiterpene (C15) olefins biosynthesis. Produces mainly longifolene, but also multiple minor products including alpha-longipinene, alpha-longicyclene, E-beta-farnesene, longiborneol, cyclosativene, beta-longipinene, and 12 other sesquiterpenes when used with farnesyl diphosphate (FPP) as substrate. This is Longifolene synthase (TPS-Lon) from Picea abies (Norway spruce).